The sequence spans 290 residues: Undecaprenyl-diphosphatase (290 aa).

A run of 8 helical transmembrane segments spans residues 5-25 (IGIFEAIVLGFVQGITEYFPI), 44-64 (GTAYSAVIQLGSLLAVLTYFY), 88-108 (VRLFWGIILGTIPIVIAGLAL), 122-142 (LSVIAVASIVMAALLWLSESL), 152-172 (IRVIDGILIGCAQALALVPGV), 195-215 (FSFLLAIPAIFLSGLLELKVL), 226-246 (PIVAGFVSSTVFSYLAIAWLL), and 255-275 (LVFVIYRFFFGALLLGLLAAG).

Belongs to the UppP family.

It localises to the cell inner membrane. It catalyses the reaction di-trans,octa-cis-undecaprenyl diphosphate + H2O = di-trans,octa-cis-undecaprenyl phosphate + phosphate + H(+). Functionally, catalyzes the dephosphorylation of undecaprenyl diphosphate (UPP). Confers resistance to bacitracin. In Gloeobacter violaceus (strain ATCC 29082 / PCC 7421), this protein is Undecaprenyl-diphosphatase.